The chain runs to 310 residues: ADP-L-glycero-D-manno-heptose-6-epimerase (310 aa).

Residues 10 to 11, 31 to 32, K38, K53, 75 to 79, and N92 contribute to the NADP(+) site; these read FI, DN, and EGACS. Y140 (proton acceptor) is an active-site residue. Position 144 (K144) interacts with NADP(+). Residue N169 coordinates substrate. NADP(+) is bound by residues V170 and K178. K178 (proton acceptor) is an active-site residue. Substrate is bound by residues S180, H187, 201 to 204, R209, and Y272; that span reads FEGS.

It belongs to the NAD(P)-dependent epimerase/dehydratase family. HldD subfamily. As to quaternary structure, homopentamer. It depends on NADP(+) as a cofactor.

The catalysed reaction is ADP-D-glycero-beta-D-manno-heptose = ADP-L-glycero-beta-D-manno-heptose. The protein operates within nucleotide-sugar biosynthesis; ADP-L-glycero-beta-D-manno-heptose biosynthesis; ADP-L-glycero-beta-D-manno-heptose from D-glycero-beta-D-manno-heptose 7-phosphate: step 4/4. Catalyzes the interconversion between ADP-D-glycero-beta-D-manno-heptose and ADP-L-glycero-beta-D-manno-heptose via an epimerization at carbon 6 of the heptose. This chain is ADP-L-glycero-D-manno-heptose-6-epimerase, found in Salmonella arizonae (strain ATCC BAA-731 / CDC346-86 / RSK2980).